The following is an 85-amino-acid chain: Putative membrane protein insertion efficiency factor (85 aa).

This sequence belongs to the UPF0161 family.

It is found in the cell inner membrane. Functionally, could be involved in insertion of integral membrane proteins into the membrane. This Enterobacter sp. (strain 638) protein is Putative membrane protein insertion efficiency factor.